Here is a 275-residue protein sequence, read N- to C-terminus: NH(3)-dependent NAD(+) synthetase (275 aa).

An ATP-binding site is contributed by 46–53; that stretch reads GISGGQDS. D52 contributes to the Mg(2+) binding site. R140 contacts deamido-NAD(+). Position 160 (T160) interacts with ATP. Mg(2+) is bound at residue E165. Positions 173 and 180 each coordinate deamido-NAD(+). 2 residues coordinate ATP: K189 and T211. Residue 260 to 261 coordinates deamido-NAD(+); the sequence is HK.

It belongs to the NAD synthetase family. As to quaternary structure, homodimer.

The catalysed reaction is deamido-NAD(+) + NH4(+) + ATP = AMP + diphosphate + NAD(+) + H(+). It functions in the pathway cofactor biosynthesis; NAD(+) biosynthesis; NAD(+) from deamido-NAD(+) (ammonia route): step 1/1. Its function is as follows. Catalyzes the ATP-dependent amidation of deamido-NAD to form NAD. Uses ammonia as a nitrogen source. In Erwinia tasmaniensis (strain DSM 17950 / CFBP 7177 / CIP 109463 / NCPPB 4357 / Et1/99), this protein is NH(3)-dependent NAD(+) synthetase.